Here is a 300-residue protein sequence, read N- to C-terminus: Diphthine methyl ester synthase (300 aa).

Residues L9, D85, G88, 113–114 (SV), and L164 contribute to the S-adenosyl-L-methionine site. S172 carries the post-translational modification Phosphoserine. Residues L222 and H247 each contribute to the S-adenosyl-L-methionine site. Position 298 is a phosphoserine (S298).

It belongs to the diphthine synthase family.

It is found in the cytoplasm. It catalyses the reaction 2-[(3S)-amino-3-carboxypropyl]-L-histidyl-[translation elongation factor 2] + 4 S-adenosyl-L-methionine = diphthine methyl ester-[translation elongation factor 2] + 4 S-adenosyl-L-homocysteine + 3 H(+). It functions in the pathway protein modification; peptidyl-diphthamide biosynthesis. Functionally, S-adenosyl-L-methionine-dependent methyltransferase that catalyzes four methylations of the modified target histidine residue in translation elongation factor 2 (EF-2), to form an intermediate called diphthine methyl ester. The four successive methylation reactions represent the second step of diphthamide biosynthesis. The protein is Diphthine methyl ester synthase (DPH5) of Saccharomyces cerevisiae (strain ATCC 204508 / S288c) (Baker's yeast).